A 159-amino-acid chain; its full sequence is Probable minor fimbrial protein (159 aa).

A propeptide spans 1 to 6 (MKKMHG) (leader sequence). At F7 the chain carries N-methylphenylalanine. The helical transmembrane segment at 7–27 (FTLIELMIVVAIIGVLASTAL) threads the bilayer. Intrachain disulfides connect C56–C71 and C140–C153.

It belongs to the N-Me-Phe pilin family. In terms of assembly, the pili are polar flexible filaments of about 5.4 nanometers diameter and 2.5 micrometers average length; they consist of only a single polypeptide chain arranged in a helical configuration of five subunits per turn in the assembled pilus.

It localises to the fimbrium. The protein resides in the membrane. The chain is Probable minor fimbrial protein (fimZ) from Dichelobacter nodosus (Bacteroides nodosus).